The sequence spans 492 residues: Cytochrome P450 26A1 (492 aa).

Residue Cys437 coordinates heme.

The protein belongs to the cytochrome P450 family. The cofactor is heme. Expressed primarily in ovary, brain and eyes.

The protein resides in the endoplasmic reticulum membrane. It is found in the microsome membrane. It catalyses the reaction all-trans-retinoate + reduced [NADPH--hemoprotein reductase] + O2 = all-trans-(4S)-hydroxyretinoate + oxidized [NADPH--hemoprotein reductase] + H2O + H(+). Functionally, a cytochrome P450 monooxygenase involved in the metabolism of all-trans retinoic acid (atRA), a signaling molecule that binds to retinoic acid receptors and regulates gene transcription. May regulate at-RA signaling during hindbrain development. Mechanistically, uses molecular oxygen inserting one oxygen atom into a substrate, and reducing the second into a water molecule, with two electrons provided by NADPH via cytochrome P450 reductase (CPR; NADPH-ferrihemoprotein reductase). Catalyzes the hydroxylation of carbon hydrogen bonds of atRA primarily at C-4. Has no activity toward 9-cis and 13-cis retinoic acid stereoisomers. May play a role in the oxidative metabolism of xenobiotics such as tazarotenic acid. This chain is Cytochrome P450 26A1 (cyp26a1), found in Xenopus laevis (African clawed frog).